Reading from the N-terminus, the 552-residue chain is Chaperonin GroEL (552 aa).

Residues 30–33 (TLGP), lysine 51, 87–91 (DGTTT), glycine 415, 480–482 (NAA), and aspartate 496 contribute to the ATP site.

Belongs to the chaperonin (HSP60) family. As to quaternary structure, forms a cylinder of 14 subunits composed of two heptameric rings stacked back-to-back. Interacts with the co-chaperonin GroES.

The protein resides in the cytoplasm. The enzyme catalyses ATP + H2O + a folded polypeptide = ADP + phosphate + an unfolded polypeptide.. Together with its co-chaperonin GroES, plays an essential role in assisting protein folding. The GroEL-GroES system forms a nano-cage that allows encapsulation of the non-native substrate proteins and provides a physical environment optimized to promote and accelerate protein folding. The sequence is that of Chaperonin GroEL from Verminephrobacter eiseniae (strain EF01-2).